The chain runs to 496 residues: MTSVQLETPHSGKYEQPTGLFINNEFVKGQEGKTFDVINPSDESVITQVHEATEKDVDIAVAAARKAFEGSWRQETPENRGKLLNNLANLFEKNIDLLAAVESLDNGKAISMAKGDISMCVGCLRYYGGWADKITGKVIDTTPDTFNYVKKEPIGVCGQIIPWNFPLLMWAWKIGPAIACGNTVVLKTAEQTPLGGLVAASLVKEAGFPPGVINVISGFGKVAGAALSSHMDVDKVAFTGSTVVGRTILKAAASSNLKKVTLELGGKSPNIVFEDADIDNAISWVNFGIFFNHGQCCCAGSRVYVQESIYDKFVQKFKERAQKNVVGDPFAADTFQGPQVSKVQFDRIMEYIQAGKDAGATVETGGKRKGDKGYFIEPTIFSNVTEDMKIVKEEIFGPVCSIAKFKTKEDAIKLGNASTYGLAAAVHTKNLNTAIEVSNALKAGTVWVNTYNTLHHQMPFGGYKESGIGRELGEDALANYTQTKTVSIRLGDALFG.

Active-site residues include glutamate 263 and cysteine 296.

It belongs to the aldehyde dehydrogenase family.

The protein localises to the cytoplasm. The catalysed reaction is an aldehyde + NAD(+) + H2O = a carboxylate + NADH + 2 H(+). This Davidiella tassiana (Mycosphaerella tassiana) protein is Aldehyde dehydrogenase (CLAH10).